An 828-amino-acid chain; its full sequence is Periplasmic nitrate reductase 1 (828 aa).

A signal peptide (tat-type signal) is located at residues 1-30 (MKMTRRAFVKANAAASAAAVAGITLPASAA). In terms of domain architecture, 4Fe-4S Mo/W bis-MGD-type spans 41-97 (IKWDKAPCRFCGTGCSVLVGTQNGRVVATQGDPEAPVNKGLNCIKGYFLSKIMYGKD). Positions 48, 51, 55, and 83 each coordinate [4Fe-4S] cluster. Residues lysine 85, glutamine 152, asparagine 177, cysteine 181, 214–221 (WGSNMAEM), 245–249 (STYYH), 264–266 (QTD), methionine 374, glutamine 378, asparagine 484, 510–511 (SD), lysine 533, aspartate 560, and 718–727 (TGRVLEHWHT) each bind Mo-bis(molybdopterin guanine dinucleotide). Phenylalanine 794 lines the substrate pocket. Mo-bis(molybdopterin guanine dinucleotide) is bound by residues asparagine 802 and lysine 819.

The protein belongs to the prokaryotic molybdopterin-containing oxidoreductase family. NasA/NapA/NarB subfamily. In terms of assembly, component of the periplasmic nitrate reductase NapAB complex composed of NapA and NapB. The cofactor is [4Fe-4S] cluster. Mo-bis(molybdopterin guanine dinucleotide) serves as cofactor. Post-translationally, predicted to be exported by the Tat system. The position of the signal peptide cleavage has not been experimentally proven.

It is found in the periplasm. It catalyses the reaction 2 Fe(II)-[cytochrome] + nitrate + 2 H(+) = 2 Fe(III)-[cytochrome] + nitrite + H2O. Its function is as follows. Catalytic subunit of the periplasmic nitrate reductase complex NapAB. Receives electrons from NapB and catalyzes the reduction of nitrate to nitrite. This is Periplasmic nitrate reductase 1 from Photobacterium profundum (strain SS9).